The sequence spans 372 residues: 3-isopropylmalate dehydrogenase (372 aa).

Position 79-90 (79-90) interacts with NAD(+); the sequence is GPKWQGGAVRPE. Substrate-binding residues include arginine 97, arginine 107, arginine 136, and aspartate 225. Residues aspartate 225, aspartate 250, and aspartate 254 each coordinate Mg(2+). Position 289–300 (289–300) interacts with NAD(+); sequence GSAPDLPAGKAN.

This sequence belongs to the isocitrate and isopropylmalate dehydrogenases family. In terms of assembly, homodimer. Requires Mg(2+) as cofactor. Mn(2+) is required as a cofactor.

Its subcellular location is the cytoplasm. The catalysed reaction is (2R,3S)-3-isopropylmalate + NAD(+) = 4-methyl-2-oxopentanoate + CO2 + NADH. It participates in amino-acid biosynthesis; L-leucine biosynthesis; L-leucine from 3-methyl-2-oxobutanoate: step 3/4. Functionally, catalyzes the oxidation of 3-carboxy-2-hydroxy-4-methylpentanoate (3-isopropylmalate) to 3-carboxy-4-methyl-2-oxopentanoate. The product decarboxylates to 4-methyl-2 oxopentanoate. The chain is 3-isopropylmalate dehydrogenase (LEU2) from Eremothecium gossypii (strain ATCC 10895 / CBS 109.51 / FGSC 9923 / NRRL Y-1056) (Yeast).